Consider the following 38-residue polypeptide: Conotoxin FVIA (38 aa).

Positions 1–12 are excised as a propeptide; sequence ILSLSLLDRSTR. 3 disulfides stabilise this stretch: cysteine 13-cysteine 28, cysteine 20-cysteine 32, and cysteine 27-cysteine 37. Residue cysteine 37 is modified to Cysteine amide.

Belongs to the conotoxin O1 superfamily. Expressed by the venom duct.

The protein resides in the secreted. Its function is as follows. Omega-conotoxins act at presynaptic membranes, they bind and block voltage-gated calcium channels (Cav). This peptide reversibly and selectively inhibits Cav2.2/CACNA1B (IC(50)=11.5 nM) voltage-gated calcium channels. Channel time recovery after toxin exposure is short (about 50 seconds). In vivo, it effectively and dose-dependently reduces nociceptive behavior in the formalin test and in neuropathic pain models, and reduces mechanical and thermal allodynia in the tail nerve injury rat model. It also shows significant analgesic effects on writhing in mouse neurotransmitter- and cytokine-induced pain models, though it has no effect on acute thermal pain and interferon-gamma-induced pain. It also depresses blood pressure immediately after administration, but pressure recovers relatively quickly and completely. The chain is Conotoxin FVIA from Conus fulmen (Thunderbolt cone).